The following is a 504-amino-acid chain: Protein FMP42 (504 aa).

The Vacuolar portion of the chain corresponds to 1–11 (MTSTRTLRYAQ). A helical membrane pass occupies residues 12–32 (VACACIWCLFSAGIIFGFAAL). The Cytoplasmic segment spans residues 33–64 (KPILISEGVYHELCDPKDGDRLLCTAQDLKLN). A helical transmembrane segment spans residues 65 to 85 (FIFALSATVTNIMALPVGKIL). Residues 86-91 (DMYGPR) lie on the Vacuolar side of the membrane. A helical transmembrane segment spans residues 92–112 (VCGIIGSCLLFLASGNFISAK). Topologically, residues 113–119 (HLVSLWD) are cytoplasmic. Residues 120–140 (PYLVGYTLLAVAGPFVFISCF) form a helical membrane-spanning segment. Topologically, residues 141–150 (QLANSFPQRS) are vacuolar. A helical transmembrane segment spans residues 151–171 (GTVLALLTGSFDSSSALFLLY). The Cytoplasmic portion of the chain corresponds to 172-186 (RLLYQNWFPTLNVSR). A helical transmembrane segment spans residues 187 to 207 (FFTLYLIVPVFILACQLTIMP). At 208–302 (HSSYKTVNHI…KSAYEQIKSP (95 aa)) the chain is on the vacuolar side. A phosphoserine mark is found at Ser-238, Ser-249, and Ser-269. Residues 303–323 (WFYLMLLFALVAMLRINYFIA) form a helical membrane-spanning segment. Topologically, residues 324–344 (TVRTQEEYLLNDPDLALKLNS) are cytoplasmic. A helical membrane pass occupies residues 345–365 (IFDMLLPLGGAVSIPFIGLLL). The Vacuolar segment spans residues 366 to 385 (DHTDTLSTLTILFTTSTAIG). A helical membrane pass occupies residues 386 to 406 (VFGLIPNSFTWNLIGIVLLVV). Residues 407-421 (YRPFYYTVVSDYSSK) lie on the Cytoplasmic side of the membrane. The chain crosses the membrane as a helical span at residues 422-442 (VFGFDTFGTVYGLLSCICGIF). At 443–462 (NMSQNLLDKWTHTTFNMNPF) the chain is on the vacuolar side. A helical membrane pass occupies residues 463–483 (PINLTLVILTVVFSLTLTFYI). Over 484 to 504 (RSQILPKPVNERGLSSNYQTI) the chain is Cytoplasmic.

This sequence belongs to the SLC43A transporter (TC 2.A.1.44) family.

Its subcellular location is the vacuole membrane. This Saccharomyces cerevisiae (strain ATCC 204508 / S288c) (Baker's yeast) protein is Protein FMP42 (FMP42).